The following is a 1233-amino-acid chain: Rho guanine nucleotide exchange factor 10-like protein (1233 aa).

A compositionally biased stretch (pro residues) spans 1 to 10 (MASSNPPPQP). Positions 1 to 93 (MASSNPPPQP…GTGVPAWVSN (93 aa)) are disordered. Positions 26–46 (EAEDDPGEAFEFDDSDDEEDT) are enriched in acidic residues. The residue at position 40 (S40) is a Phosphoserine. Residues 72–89 (PVTDPDPAAAPPGTGVPA) show a composition bias toward low complexity. A phosphotyrosine mark is found at Y131 and Y152. The disordered stretch occupies residues 159–193 (GAPRQAEDLGWSSSEFESYSEDSGEEAKPEVEPAK). The segment covering 183 to 193 (EEAKPEVEPAK) has biased composition (basic and acidic residues). S240 carries the phosphoserine modification. A DH domain is found at 275–462 (VRRHILGSIV…ETLAEKLNEQ (188 aa)). The span at 1089–1104 (QEEAEGPRAEEEKPDG) shows a compositional bias: basic and acidic residues. Disordered regions lie at residues 1089–1117 (QEEA…HVGR) and 1140–1161 (PLLS…SEED).

As to quaternary structure, interacts with RHOA, RHOB and RHOC.

The protein resides in the cytoplasm. Acts as a guanine nucleotide exchange factor (GEF) for RHOA, RHOB and RHOC. This chain is Rho guanine nucleotide exchange factor 10-like protein (ARHGEF10L), found in Pongo abelii (Sumatran orangutan).